The sequence spans 241 residues: Probable transcriptional regulatory protein AZOSEA20720 (241 aa).

A disordered region spans residues 1–21 (MAGHSKWANIQHRKGRQDAKR).

It belongs to the TACO1 family.

The protein localises to the cytoplasm. This chain is Probable transcriptional regulatory protein AZOSEA20720, found in Aromatoleum aromaticum (strain DSM 19018 / LMG 30748 / EbN1) (Azoarcus sp. (strain EbN1)).